The sequence spans 187 residues: Elongation factor P (187 aa).

The protein belongs to the elongation factor P family.

It localises to the cytoplasm. It participates in protein biosynthesis; polypeptide chain elongation. Functionally, involved in peptide bond synthesis. Stimulates efficient translation and peptide-bond synthesis on native or reconstituted 70S ribosomes in vitro. Probably functions indirectly by altering the affinity of the ribosome for aminoacyl-tRNA, thus increasing their reactivity as acceptors for peptidyl transferase. The protein is Elongation factor P of Prochlorococcus marinus (strain NATL1A).